The chain runs to 357 residues: Putative minor fimbrial subunit PmfE (357 aa).

The signal sequence occupies residues 1-28; sequence MILNKKNIHSKSVMLFCAGIVSLMPLHA.

The protein resides in the fimbrium. The polypeptide is Putative minor fimbrial subunit PmfE (pmfE) (Proteus mirabilis (strain HI4320)).